Consider the following 150-residue polypeptide: D-aminoacyl-tRNA deacylase (150 aa).

A Gly-cisPro motif, important for rejection of L-amino acids motif is present at residues 136–137; it reads GP.

It belongs to the DTD family. In terms of assembly, homodimer.

The protein resides in the cytoplasm. It catalyses the reaction glycyl-tRNA(Ala) + H2O = tRNA(Ala) + glycine + H(+). It carries out the reaction a D-aminoacyl-tRNA + H2O = a tRNA + a D-alpha-amino acid + H(+). An aminoacyl-tRNA editing enzyme that deacylates mischarged D-aminoacyl-tRNAs. Also deacylates mischarged glycyl-tRNA(Ala), protecting cells against glycine mischarging by AlaRS. Acts via tRNA-based rather than protein-based catalysis; rejects L-amino acids rather than detecting D-amino acids in the active site. By recycling D-aminoacyl-tRNA to D-amino acids and free tRNA molecules, this enzyme counteracts the toxicity associated with the formation of D-aminoacyl-tRNA entities in vivo and helps enforce protein L-homochirality. The chain is D-aminoacyl-tRNA deacylase from Staphylococcus saprophyticus subsp. saprophyticus (strain ATCC 15305 / DSM 20229 / NCIMB 8711 / NCTC 7292 / S-41).